Consider the following 581-residue polypeptide: Protein GAMETOPHYTE DEFECTIVE 1 (581 aa).

Residues 452–467 (SMNIESTSEGGSMSPS) show a composition bias toward polar residues. The segment at 452-512 (SMNIESTSEG…TTGHASNDEM (61 aa)) is disordered. Residues 496-512 (ENSKERATTGHASNDEM) are compositionally biased toward basic and acidic residues.

Belongs to the eukaryotic/archaeal RNase P protein component 3 family. As to quaternary structure, probable component of nuclear RNase P and RNase MRP ribonucleoproteins. Interacts with POP5. In terms of tissue distribution, mostly expressed in inflorescence and roots, to a lower extent in leaves, and, at low levels, in siliques, seedlings and stems.

The protein localises to the nucleus. Its subcellular location is the nucleolus. It localises to the mitochondrion. Probable component of ribonuclease P, a ribonucleoprotein complex that generates mature tRNA molecules by cleaving their 5'-ends. May also be a component of the MRP ribonuclease complex, which cleaves pre-rRNA sequences. Required for female gametophyte development and male competence. The protein is Protein GAMETOPHYTE DEFECTIVE 1 of Arabidopsis thaliana (Mouse-ear cress).